The following is a 688-amino-acid chain: Glycine--tRNA ligase beta subunit (688 aa).

The protein belongs to the class-II aminoacyl-tRNA synthetase family. As to quaternary structure, tetramer of two alpha and two beta subunits.

The protein localises to the cytoplasm. It catalyses the reaction tRNA(Gly) + glycine + ATP = glycyl-tRNA(Gly) + AMP + diphosphate. The protein is Glycine--tRNA ligase beta subunit of Vibrio parahaemolyticus serotype O3:K6 (strain RIMD 2210633).